The following is a 130-amino-acid chain: Fluoride-specific ion channel FluC (130 aa).

Transmembrane regions (helical) follow at residues 3 to 23, 38 to 58, 67 to 87, and 102 to 122; these read FVFL…YFVG, LGTF…GHLA, FGIF…SYGL, and ISYV…GWFL. Na(+) is bound by residues G77 and T80.

Belongs to the fluoride channel Fluc/FEX (TC 1.A.43) family.

It is found in the cell inner membrane. The enzyme catalyses fluoride(in) = fluoride(out). Its activity is regulated as follows. Na(+) is not transported, but it plays an essential structural role and its presence is essential for fluoride channel function. Its function is as follows. Fluoride-specific ion channel. Important for reducing fluoride concentration in the cell, thus reducing its toxicity. This chain is Fluoride-specific ion channel FluC, found in Helicobacter pylori (strain G27).